We begin with the raw amino-acid sequence, 432 residues long: uncharacterized protein (432 aa).

N6-(pyridoxal phosphate)lysine is present on Lys243.

This sequence belongs to the class-II pyridoxal-phosphate-dependent aminotransferase family. Pyridoxal 5'-phosphate is required as a cofactor.

Its subcellular location is the cytoplasm. This is an uncharacterized protein from Methanocaldococcus jannaschii (strain ATCC 43067 / DSM 2661 / JAL-1 / JCM 10045 / NBRC 100440) (Methanococcus jannaschii).